Reading from the N-terminus, the 140-residue chain is Nucleoside diphosphate kinase (140 aa).

6 residues coordinate ATP: lysine 11, phenylalanine 59, arginine 87, threonine 93, arginine 104, and asparagine 114. Histidine 117 serves as the catalytic Pros-phosphohistidine intermediate.

It belongs to the NDK family. As to quaternary structure, homotetramer. The cofactor is Mg(2+).

Its subcellular location is the cytoplasm. It carries out the reaction a 2'-deoxyribonucleoside 5'-diphosphate + ATP = a 2'-deoxyribonucleoside 5'-triphosphate + ADP. The enzyme catalyses a ribonucleoside 5'-diphosphate + ATP = a ribonucleoside 5'-triphosphate + ADP. Major role in the synthesis of nucleoside triphosphates other than ATP. The ATP gamma phosphate is transferred to the NDP beta phosphate via a ping-pong mechanism, using a phosphorylated active-site intermediate. This is Nucleoside diphosphate kinase from Francisella philomiragia subsp. philomiragia (strain ATCC 25017 / CCUG 19701 / FSC 153 / O#319-036).